The chain runs to 446 residues: N-succinylarginine dihydrolase (446 aa).

Residues 19–28 (AGLSFGNVAS), asparagine 110, and 137–138 (HR) each bind substrate. The active site involves glutamate 174. Arginine 213 lines the substrate pocket. The active site involves histidine 249. The substrate site is built by aspartate 251 and asparagine 364. Cysteine 370 (nucleophile) is an active-site residue.

It belongs to the succinylarginine dihydrolase family. Homodimer.

It catalyses the reaction N(2)-succinyl-L-arginine + 2 H2O + 2 H(+) = N(2)-succinyl-L-ornithine + 2 NH4(+) + CO2. It functions in the pathway amino-acid degradation; L-arginine degradation via AST pathway; L-glutamate and succinate from L-arginine: step 2/5. Functionally, catalyzes the hydrolysis of N(2)-succinylarginine into N(2)-succinylornithine, ammonia and CO(2). This is N-succinylarginine dihydrolase from Burkholderia cenocepacia (strain ATCC BAA-245 / DSM 16553 / LMG 16656 / NCTC 13227 / J2315 / CF5610) (Burkholderia cepacia (strain J2315)).